Consider the following 225-residue polypeptide: Leucyl/phenylalanyl-tRNA--protein transferase (225 aa).

The protein belongs to the L/F-transferase family.

It localises to the cytoplasm. It carries out the reaction N-terminal L-lysyl-[protein] + L-leucyl-tRNA(Leu) = N-terminal L-leucyl-L-lysyl-[protein] + tRNA(Leu) + H(+). The enzyme catalyses N-terminal L-arginyl-[protein] + L-leucyl-tRNA(Leu) = N-terminal L-leucyl-L-arginyl-[protein] + tRNA(Leu) + H(+). The catalysed reaction is L-phenylalanyl-tRNA(Phe) + an N-terminal L-alpha-aminoacyl-[protein] = an N-terminal L-phenylalanyl-L-alpha-aminoacyl-[protein] + tRNA(Phe). Functionally, functions in the N-end rule pathway of protein degradation where it conjugates Leu, Phe and, less efficiently, Met from aminoacyl-tRNAs to the N-termini of proteins containing an N-terminal arginine or lysine. This Rhodopseudomonas palustris (strain TIE-1) protein is Leucyl/phenylalanyl-tRNA--protein transferase.